A 125-amino-acid chain; its full sequence is Calcitonin receptor-stimulating peptide 1 (125 aa).

The N-terminal stretch at 1-25 (MGFWKFPPFLVLSILVLYQAGMFHA) is a signal peptide. The propeptide occupies 26 to 77 (APFRSVFDGRFDPATLDEEESRLLLAAMVNDYEQMRARESEKAQKTEGSRIQ). A disulfide bridge links C81 with C86.

The protein belongs to the calcitonin family.

It localises to the secreted. In terms of biological role, stimulates cAMP production in porcine kidney cell line LLC-PK1 via the calcitonin receptor (CT) but not via the CT-like (CL) receptor. The polypeptide is Calcitonin receptor-stimulating peptide 1 (CRSP1) (Capra hircus (Goat)).